We begin with the raw amino-acid sequence, 271 residues long: Ribosomal RNA small subunit methyltransferase A (271 aa).

N22, L24, G49, E70, D96, and N116 together coordinate S-adenosyl-L-methionine.

Belongs to the class I-like SAM-binding methyltransferase superfamily. rRNA adenine N(6)-methyltransferase family. RsmA subfamily.

The protein localises to the cytoplasm. The catalysed reaction is adenosine(1518)/adenosine(1519) in 16S rRNA + 4 S-adenosyl-L-methionine = N(6)-dimethyladenosine(1518)/N(6)-dimethyladenosine(1519) in 16S rRNA + 4 S-adenosyl-L-homocysteine + 4 H(+). Specifically dimethylates two adjacent adenosines (A1518 and A1519) in the loop of a conserved hairpin near the 3'-end of 16S rRNA in the 30S particle. May play a critical role in biogenesis of 30S subunits. The polypeptide is Ribosomal RNA small subunit methyltransferase A (Sphingopyxis alaskensis (strain DSM 13593 / LMG 18877 / RB2256) (Sphingomonas alaskensis)).